Consider the following 151-residue polypeptide: Deazaflavin-dependent nitroreductase (151 aa).

Coenzyme F420-(gamma-Glu)n-binding positions include 54–56 (RKT), 60–65 (RVNPLY), 76–79 (AASK), 87–91 (MWYLN), and Y133.

It belongs to the F420H(2)-dependent quinone reductase family.

It is found in the cell membrane. It catalyses the reaction oxidized coenzyme F420-(gamma-L-Glu)(n) + a quinol + H(+) = reduced coenzyme F420-(gamma-L-Glu)(n) + a quinone. Functionally, involved in a F420-dependent anti-oxidant mechanism that protects M.tuberculosis against oxidative stress and bactericidal agents. Catalyzes the F420H(2)-dependent two-electron reduction of quinones to dihydroquinones, thereby preventing the formation of cytotoxic semiquinones obtained by the one-electron reduction pathway. In vitro, catalyzes the reduction of both benzoquinone and naphthoquinone analogs; since menaquinone is the sole quinone electron carrier in the respiratory chain in M.tuberculosis, the physiological electron acceptor for Fqr-mediated F420H(2) oxidation is therefore likely to be the endogenous menaquinone found in the membrane fraction of M.tuberculosis. Is able to use F420 species with two and five glutamate residues in its polyglutamate tail. Cannot use NADH or NADPH instead of F420H(2) as the electron donor. Is involved in the bioreductive activation of bicyclic 4-nitroimidazole prodrugs such as PA-824 and delamanid developed for anti-tuberculosis therapy against both replicating and persistent bacteria. It converts PA-824 into three primary metabolites resulting from reduction of the imidazole ring at C-3; the major one is the corresponding des-nitroimidazole that generates lethal reactive nitrogen species, including nitric oxide (NO), which appears to be responsible for the anaerobic killing activity. Ddn uses the reduced F420 produced by FGD1 to activate PA-824. Delamanid (OPC-67683) is also reduced by Ddn to its des-nitro form. The chain is Deazaflavin-dependent nitroreductase (ddn) from Mycobacterium tuberculosis (strain CDC 1551 / Oshkosh).